Here is a 389-residue protein sequence, read N- to C-terminus: Alpha-2B adrenergic receptor (389 aa).

Residues 1 to 25 (AIAAVITFLILFTIFGNALVILAVL) traverse the membrane as a helical segment. At 26 to 36 (TSRSLRAPQNL) the chain is on the cytoplasmic side. The chain crosses the membrane as a helical span at residues 37-62 (FLVSLAAADILVATLIIPFSLANELL). Topologically, residues 63 to 72 (GYWYFRRTWC) are extracellular. Cysteine 72 and cysteine 151 are oxidised to a cystine. Residues 73-95 (EVYLALDVLFCTSSIVHLCAISL) traverse the membrane as a helical segment. The Cytoplasmic portion of the chain corresponds to 96-117 (DRYWAVTRALEYNTKRTPRRIK). The helical transmembrane segment at 118–140 (CIILTVWLIAAVISLPPLIYKGD) threads the bilayer. Residues 141 to 156 (QGPQPRGRPQCKLNQE) lie on the Extracellular side of the membrane. The helical transmembrane segment at 157–180 (AWYILASSIGSFFAPCLIMILVYL) threads the bilayer. Residues 181–363 (RIYLIAKRSH…LTREKRFTFV (183 aa)) are Cytoplasmic-facing. Disordered regions lie at residues 194 to 216 (PRAK…AGAS) and 233 to 320 (EANG…PLQQ). Residues 196–205 (AKGGPGGGGS) show a composition bias toward gly residues. Residues 255–267 (PALPSSWPALPSS) show a composition bias toward low complexity. Acidic residues predominate over residues 280–302 (LEEEAEEEEEEEEEEEEGEEECE). The span at 303–320 (PQALPASPASACSPPLQQ) shows a compositional bias: low complexity. Residues 364 to 387 (LAVVIGVFVLCWFPFFFSYSLGAI) traverse the membrane as a helical segment. Over 388 to 389 (CP) the chain is Extracellular.

The protein belongs to the G-protein coupled receptor 1 family. Adrenergic receptor subfamily. ADRA2B sub-subfamily. Interacts with RAB26. Interacts with PPP1R9B. Interacts with GGA1, GGA2 and GGA3.

It localises to the cell membrane. Alpha-2 adrenergic receptors mediate the catecholamine-induced inhibition of adenylate cyclase through the action of G proteins. The polypeptide is Alpha-2B adrenergic receptor (ADRA2B) (Equus caballus (Horse)).